Reading from the N-terminus, the 161-residue chain is UPF0262 protein Meso_0189 (161 aa).

The protein belongs to the UPF0262 family.

The sequence is that of UPF0262 protein Meso_0189 from Chelativorans sp. (strain BNC1).